A 509-amino-acid chain; its full sequence is Leucine-rich repeat-containing protein 14 (509 aa).

The stretch at 111–146 (RQRLRLLDMTGMQEEGLEQNPDTMSLWSRTVTLAKA) is one LRR 1; degenerate repeat. An LRR 2; degenerate repeat occupies 210-234 (RLQCRDFRAEELSLRSTAGLLELLN). Residues 235–262 (PGSVRQIDLRFNNLGLSGLNVLLPHMAK) form an LRR 3; degenerate repeat. An LRR 4; degenerate repeat occupies 263 to 298 (FSHLQSLKLPYSNVDVRRLSPVMEEGLQSFASQLGQ). 5 LRR repeats span residues 299 to 323 (LGALKELNLGSSRLSGRLRQLLGGL), 324 to 355 (QRPLESLELAFCSLLPMDLSYLSQSSHMSSLR), 356 to 374 (KLDLSGNNLSEFLLTPFLH), 380 to 407 (SGHLLYLDVMECKLADAHLSALMPILCR), and 408 to 432 (CSWLRYLGLFCNPISSDGLRMVLQN).

This sequence belongs to the PRAME family. LRRC14 subfamily.

It is found in the cytoplasm. This is Leucine-rich repeat-containing protein 14 from Xenopus laevis (African clawed frog).